We begin with the raw amino-acid sequence, 225 residues long: Probable polyketide biosynthesis zinc-dependent hydrolase BaeB (225 aa).

The Zn(2+) site is built by histidine 62, histidine 64, aspartate 66, histidine 67, histidine 123, aspartate 140, and histidine 181.

Belongs to the metallo-beta-lactamase superfamily. The cofactor is Zn(2+).

The protein resides in the cytoplasm. It participates in antibiotic biosynthesis; bacillaene biosynthesis. Probably involved in some intermediate steps for the synthesis of the antibiotic polyketide bacillaene which is involved in secondary metabolism. This Bacillus velezensis (strain DSM 23117 / BGSC 10A6 / LMG 26770 / FZB42) (Bacillus amyloliquefaciens subsp. plantarum) protein is Probable polyketide biosynthesis zinc-dependent hydrolase BaeB (baeB).